Consider the following 412-residue polypeptide: Multifunctional CCA protein (412 aa).

ATP is bound by residues Gly8 and Arg11. Residues Gly8 and Arg11 each coordinate CTP. The Mg(2+) site is built by Asp21 and Asp23. ATP is bound by residues Arg91, Arg137, and Arg140. Residues Arg91, Arg137, and Arg140 each coordinate CTP. The HD domain maps to 228–329 (TGIHTLMTLS…VKLFDSIDAW (102 aa)).

The protein belongs to the tRNA nucleotidyltransferase/poly(A) polymerase family. Bacterial CCA-adding enzyme type 1 subfamily. In terms of assembly, monomer. Can also form homodimers and oligomers. The cofactor is Mg(2+). Requires Ni(2+) as cofactor.

The enzyme catalyses a tRNA precursor + 2 CTP + ATP = a tRNA with a 3' CCA end + 3 diphosphate. The catalysed reaction is a tRNA with a 3' CCA end + 2 CTP + ATP = a tRNA with a 3' CCACCA end + 3 diphosphate. Functionally, catalyzes the addition and repair of the essential 3'-terminal CCA sequence in tRNAs without using a nucleic acid template. Adds these three nucleotides in the order of C, C, and A to the tRNA nucleotide-73, using CTP and ATP as substrates and producing inorganic pyrophosphate. tRNA 3'-terminal CCA addition is required both for tRNA processing and repair. Also involved in tRNA surveillance by mediating tandem CCA addition to generate a CCACCA at the 3' terminus of unstable tRNAs. While stable tRNAs receive only 3'-terminal CCA, unstable tRNAs are marked with CCACCA and rapidly degraded. The chain is Multifunctional CCA protein from Escherichia coli O81 (strain ED1a).